Here is a 607-residue protein sequence, read N- to C-terminus: tRNA uridine 5-carboxymethylaminomethyl modification enzyme MnmG (607 aa).

FAD-binding positions include 11-16 (GGGHAG), V123, and S178. 270 to 284 (GPRYCPSVEDKIVRF) contributes to the NAD(+) binding site. Q367 is a binding site for FAD.

Belongs to the MnmG family. In terms of assembly, homodimer. Heterotetramer of two MnmE and two MnmG subunits. FAD is required as a cofactor.

Its subcellular location is the cytoplasm. Functionally, NAD-binding protein involved in the addition of a carboxymethylaminomethyl (cmnm) group at the wobble position (U34) of certain tRNAs, forming tRNA-cmnm(5)s(2)U34. This is tRNA uridine 5-carboxymethylaminomethyl modification enzyme MnmG from Metamycoplasma arthritidis (strain 158L3-1) (Mycoplasma arthritidis).